Consider the following 506-residue polypeptide: Histidine ammonia-lyase (506 aa).

The segment at residues 143–145 is a cross-link (5-imidazolinone (Ala-Gly)); sequence ASG. Serine 144 is modified (2,3-didehydroalanine (Ser)).

It belongs to the PAL/histidase family. Post-translationally, contains an active site 4-methylidene-imidazol-5-one (MIO), which is formed autocatalytically by cyclization and dehydration of residues Ala-Ser-Gly.

Its subcellular location is the cytoplasm. It catalyses the reaction L-histidine = trans-urocanate + NH4(+). Its pathway is amino-acid degradation; L-histidine degradation into L-glutamate; N-formimidoyl-L-glutamate from L-histidine: step 1/3. This Salmonella choleraesuis (strain SC-B67) protein is Histidine ammonia-lyase.